The chain runs to 201 residues: Putative 3-methyladenine DNA glycosylase (201 aa).

Belongs to the DNA glycosylase MPG family.

This is Putative 3-methyladenine DNA glycosylase from Nitrosococcus oceani (strain ATCC 19707 / BCRC 17464 / JCM 30415 / NCIMB 11848 / C-107).